The sequence spans 498 residues: Putative ABC transporter ATP-binding protein MM_2387 (498 aa).

ABC transporter domains lie at 2–242 (IELR…TSKS) and 258–490 (ISIK…VEEK). ATP-binding positions include 36–43 (GHSAAGKT) and 290–297 (GENGSGKT).

This sequence belongs to the ABC transporter superfamily.

It localises to the cell membrane. Probably part of an ABC transporter complex. Responsible for energy coupling to the transport system. The chain is Putative ABC transporter ATP-binding protein MM_2387 from Methanosarcina mazei (strain ATCC BAA-159 / DSM 3647 / Goe1 / Go1 / JCM 11833 / OCM 88) (Methanosarcina frisia).